An 88-amino-acid chain; its full sequence is Homeobox protein knotted-1-like 11 (88 aa).

The 21-residue stretch at Glu4–Phe24 folds into the ELK domain. The segment at residues Leu25–Ser88 is a DNA-binding region (homeobox; TALE-type).

This sequence belongs to the TALE/KNOX homeobox family.

Its subcellular location is the nucleus. Functionally, probably binds to the DNA sequence 5'-TGAC-3'. This chain is Homeobox protein knotted-1-like 11 (KNOX11), found in Zea mays (Maize).